The chain runs to 89 residues: Small ribosomal subunit protein uS15 (89 aa).

The span at 1–21 (MSITPERKQEMIKDYATKEGD) shows a compositional bias: basic and acidic residues. The tract at residues 1–23 (MSITPERKQEMIKDYATKEGDTG) is disordered.

It belongs to the universal ribosomal protein uS15 family. As to quaternary structure, part of the 30S ribosomal subunit. Forms a bridge to the 50S subunit in the 70S ribosome, contacting the 23S rRNA.

Its function is as follows. One of the primary rRNA binding proteins, it binds directly to 16S rRNA where it helps nucleate assembly of the platform of the 30S subunit by binding and bridging several RNA helices of the 16S rRNA. Functionally, forms an intersubunit bridge (bridge B4) with the 23S rRNA of the 50S subunit in the ribosome. The protein is Small ribosomal subunit protein uS15 of Rhodospirillum rubrum (strain ATCC 11170 / ATH 1.1.1 / DSM 467 / LMG 4362 / NCIMB 8255 / S1).